Here is a 259-residue protein sequence, read N- to C-terminus: Deoxyribose-phosphate aldolase (259 aa).

Catalysis depends on Asp-102, which acts as the Proton donor/acceptor. Lys-166 acts as the Schiff-base intermediate with acetaldehyde in catalysis. Lys-200 serves as the catalytic Proton donor/acceptor.

It belongs to the DeoC/FbaB aldolase family. DeoC type 2 subfamily.

It localises to the cytoplasm. It catalyses the reaction 2-deoxy-D-ribose 5-phosphate = D-glyceraldehyde 3-phosphate + acetaldehyde. Its pathway is carbohydrate degradation; 2-deoxy-D-ribose 1-phosphate degradation; D-glyceraldehyde 3-phosphate and acetaldehyde from 2-deoxy-alpha-D-ribose 1-phosphate: step 2/2. Catalyzes a reversible aldol reaction between acetaldehyde and D-glyceraldehyde 3-phosphate to generate 2-deoxy-D-ribose 5-phosphate. This is Deoxyribose-phosphate aldolase from Vibrio cholerae serotype O1 (strain ATCC 39315 / El Tor Inaba N16961).